The sequence spans 359 residues: 1-deoxy-D-xylulose 5-phosphate reductoisomerase (359 aa).

Positions 7, 8, 9, 10, 31, 32, 33, and 111 each coordinate NADPH. Lysine 112 contacts 1-deoxy-D-xylulose 5-phosphate. Residue glutamate 113 participates in NADPH binding. Residue aspartate 131 participates in Mn(2+) binding. 4 residues coordinate 1-deoxy-D-xylulose 5-phosphate: serine 132, glutamate 133, serine 155, and histidine 178. Glutamate 133 serves as a coordination point for Mn(2+). Residue glycine 184 participates in NADPH binding. Residues serine 191, asparagine 196, lysine 197, and glutamate 200 each coordinate 1-deoxy-D-xylulose 5-phosphate. A Mn(2+)-binding site is contributed by glutamate 200.

Belongs to the DXR family. Mg(2+) serves as cofactor. The cofactor is Mn(2+).

The catalysed reaction is 2-C-methyl-D-erythritol 4-phosphate + NADP(+) = 1-deoxy-D-xylulose 5-phosphate + NADPH + H(+). It functions in the pathway isoprenoid biosynthesis; isopentenyl diphosphate biosynthesis via DXP pathway; isopentenyl diphosphate from 1-deoxy-D-xylulose 5-phosphate: step 1/6. Functionally, catalyzes the NADPH-dependent rearrangement and reduction of 1-deoxy-D-xylulose-5-phosphate (DXP) to 2-C-methyl-D-erythritol 4-phosphate (MEP). In Campylobacter lari (strain RM2100 / D67 / ATCC BAA-1060), this protein is 1-deoxy-D-xylulose 5-phosphate reductoisomerase.